The chain runs to 414 residues: Argininosuccinate synthase (414 aa).

Residues 15–23 (AYSGGLDTS) and alanine 42 each bind ATP. L-citrulline is bound by residues tyrosine 93 and serine 98. Position 123 (glycine 123) interacts with ATP. Threonine 125, asparagine 129, and aspartate 130 together coordinate L-aspartate. Asparagine 129 contributes to the L-citrulline binding site. 5 residues coordinate L-citrulline: arginine 133, serine 182, serine 191, glutamate 267, and tyrosine 279.

This sequence belongs to the argininosuccinate synthase family. Type 1 subfamily. In terms of assembly, homotetramer.

The protein localises to the cytoplasm. The enzyme catalyses L-citrulline + L-aspartate + ATP = 2-(N(omega)-L-arginino)succinate + AMP + diphosphate + H(+). It functions in the pathway amino-acid biosynthesis; L-arginine biosynthesis; L-arginine from L-ornithine and carbamoyl phosphate: step 2/3. The protein is Argininosuccinate synthase of Deinococcus geothermalis (strain DSM 11300 / CIP 105573 / AG-3a).